We begin with the raw amino-acid sequence, 338 residues long: MENLDALVAQALEAVQRAEDITTLEQIRVQFLGKKGELTQVMKTLGNLPAEERPKVGALINDAKERVTDVLNARKAGFEEAELNARLAAECIDVTLPGRGQTTGGLHPITRTLERIEQFFTHIGYGIAEGPEVEDDYHNFEALNIPGHHPARAMHDTFYFNANMLLRTHTSPVQVRTMESSQPPIRIVCPGRVYRCDSDITHSPMFHQVEGLLIDRGINFADLKGTIEEFLRVFFEKELAVRFRPSFFPFTEPSAEVDIQCVMCSGKGCRVCKQTGWLEVMGCGMVHPNVLRMSGIDPEEFQGFAFGMGAERLAMLRYGVNDLRLFFDNDLRFLAQFR.

Position 252 (Glu-252) interacts with Mg(2+).

This sequence belongs to the class-II aminoacyl-tRNA synthetase family. Phe-tRNA synthetase alpha subunit type 1 subfamily. As to quaternary structure, tetramer of two alpha and two beta subunits. Mg(2+) is required as a cofactor.

The protein resides in the cytoplasm. The enzyme catalyses tRNA(Phe) + L-phenylalanine + ATP = L-phenylalanyl-tRNA(Phe) + AMP + diphosphate + H(+). In Pseudomonas entomophila (strain L48), this protein is Phenylalanine--tRNA ligase alpha subunit.